The sequence spans 776 residues: Protein phosphatase 1 regulatory subunit 21 (776 aa).

Coiled-coil stretches lie at residues 4 to 206 (GDLQ…LKTL), 432 to 466 (RLHDISQELSKHYNNKAALEQELPAATDKLKTTND), and 555 to 597 (ESRE…KETL).

Component of the FERRY complex.

The protein resides in the early endosome. Functionally, component of the FERRY complex (Five-subunit Endosomal Rab5 and RNA/ribosome intermediary). The FERRY complex directly interacts with mRNAs and RAB5A, and functions as a RAB5A effector involved in the localization and the distribution of specific mRNAs most likely by mediating their endosomal transport. The complex recruits mRNAs and ribosomes to early endosomes through direct mRNA-interaction. Putative regulator of protein phosphatase 1 (PP1) activity. May play a role in the endosomal sorting process or in endosome maturation pathway. This chain is Protein phosphatase 1 regulatory subunit 21 (ppp1r21), found in Xenopus laevis (African clawed frog).